Reading from the N-terminus, the 98-residue chain is DNA-binding protein Fis (98 aa).

The H-T-H motif DNA-binding region spans 74–93 (QTRAALMMGINRGTLRKKLK).

Belongs to the transcriptional regulatory Fis family. Homodimer.

Functionally, activates ribosomal RNA transcription. Plays a direct role in upstream activation of rRNA promoters. In Yersinia enterocolitica serotype O:8 / biotype 1B (strain NCTC 13174 / 8081), this protein is DNA-binding protein Fis.